The sequence spans 314 residues: Methionyl-tRNA formyltransferase (314 aa).

109 to 112 (SLLP) is a binding site for (6S)-5,6,7,8-tetrahydrofolate.

It belongs to the Fmt family.

It carries out the reaction L-methionyl-tRNA(fMet) + (6R)-10-formyltetrahydrofolate = N-formyl-L-methionyl-tRNA(fMet) + (6S)-5,6,7,8-tetrahydrofolate + H(+). Functionally, attaches a formyl group to the free amino group of methionyl-tRNA(fMet). The formyl group appears to play a dual role in the initiator identity of N-formylmethionyl-tRNA by promoting its recognition by IF2 and preventing the misappropriation of this tRNA by the elongation apparatus. In Alkaliphilus metalliredigens (strain QYMF), this protein is Methionyl-tRNA formyltransferase.